The chain runs to 292 residues: UDP-3-O-acyl-N-acetylglucosamine deacetylase (292 aa).

3 residues coordinate Zn(2+): H75, H231, and D235. H258 (proton donor) is an active-site residue.

Belongs to the LpxC family. Zn(2+) serves as cofactor.

It carries out the reaction a UDP-3-O-[(3R)-3-hydroxyacyl]-N-acetyl-alpha-D-glucosamine + H2O = a UDP-3-O-[(3R)-3-hydroxyacyl]-alpha-D-glucosamine + acetate. The protein operates within glycolipid biosynthesis; lipid IV(A) biosynthesis; lipid IV(A) from (3R)-3-hydroxytetradecanoyl-[acyl-carrier-protein] and UDP-N-acetyl-alpha-D-glucosamine: step 2/6. In terms of biological role, catalyzes the hydrolysis of UDP-3-O-myristoyl-N-acetylglucosamine to form UDP-3-O-myristoylglucosamine and acetate, the committed step in lipid A biosynthesis. This Nautilia profundicola (strain ATCC BAA-1463 / DSM 18972 / AmH) protein is UDP-3-O-acyl-N-acetylglucosamine deacetylase.